The sequence spans 293 residues: Homoserine kinase (293 aa).

84-94 (PISRGLGSSSA) contacts ATP.

This sequence belongs to the GHMP kinase family. Homoserine kinase subfamily.

The protein localises to the cytoplasm. It catalyses the reaction L-homoserine + ATP = O-phospho-L-homoserine + ADP + H(+). Its pathway is amino-acid biosynthesis; L-threonine biosynthesis; L-threonine from L-aspartate: step 4/5. In terms of biological role, catalyzes the ATP-dependent phosphorylation of L-homoserine to L-homoserine phosphate. The polypeptide is Homoserine kinase (Wolinella succinogenes (strain ATCC 29543 / DSM 1740 / CCUG 13145 / JCM 31913 / LMG 7466 / NCTC 11488 / FDC 602W) (Vibrio succinogenes)).